The sequence spans 477 residues: S-triazine hydrolase (477 aa).

Composition is skewed to low complexity over residues 38 to 73 (SPTT…KSSS) and 120 to 132 (PLSS…DPTT). Disordered regions lie at residues 38–77 (SPTT…GVVH) and 120–143 (PLSS…GSPF).

The protein belongs to the metallo-dependent hydrolases superfamily. ATZ/TRZ family.

The protein operates within xenobiotic degradation; melamine degradation. Hydrolytic deamination of the S-triazine substrate melamine. The sequence is that of S-triazine hydrolase (trzA) from Gordonia rubripertincta (Rhodococcus corallinus).